A 252-amino-acid chain; its full sequence is H-2 class II histocompatibility antigen, A-F beta chain (252 aa).

Positions 1-16 are cleaved as a signal peptide; the sequence is AAVVVLMVLSSPGTEG. Residues 17–109 form a beta-1 region; that stretch reads GNSERHFVSQ…VETPTSLRRL (93 aa). At 17-213 the chain is on the extracellular side; that stretch reads GNSERHFVSQ…RAQSESARSK (197 aa). Cystine bridges form between C31–C93 and C132–C188. N35 carries an N-linked (GlcNAc...) asparagine glycan. Residues 110-203 form a beta-2 region; the sequence is EQPNVVISLS…SLKSPITVEW (94 aa). Residues 112 to 200 form the Ig-like C1-type domain; it reads PNVVISLSRT…EHPSLKSPIT (89 aa). The interval 204–213 is connecting peptide; the sequence is RAQSESARSK. A helical transmembrane segment spans residues 214–234; the sequence is MLSGIGGCVLGVIFLGLGLFI. Residues 235–252 are Cytoplasmic-facing; it reads RYRSQKGPRGPPPAGLLQ.

This sequence belongs to the MHC class II family. Post-translationally, ubiquitinated in immature dendritic cells leading to down-regulation of MHC class II.

The protein resides in the membrane. This Mus musculus (Mouse) protein is H-2 class II histocompatibility antigen, A-F beta chain (H2-Ab1).